The primary structure comprises 462 residues: Stabilizer of axonemal microtubules 1 (462 aa).

Mn stretches follow at residues 30-64 (KPCF…KVNI), 65-97 (PMEG…PIQD), 98-131 (EMDF…QCND), 132-165 (KMEC…PASC), 166-199 (RFDH…LCNI), 200-232 (PLES…PSEV), 233-266 (PFDS…GLDI), 267-299 (PFPS…PPEG), 300-332 (KMDL…KKSD), 333-366 (RFES…FSDE), 367-400 (PMEY…RVNI), and 401-434 (PLEG…IFDE).

The protein belongs to the FAM154 family. In terms of assembly, associates with microtubules via the Mn regions.

It localises to the cytoplasm. It is found in the cytoskeleton. The protein localises to the microtubule organizing center. Its subcellular location is the centrosome. The protein resides in the centriole. It localises to the cilium basal body. It is found in the cilium axoneme. Its function is as follows. May play a role in the regulation of cilium length. Stabilizes microtubules at low temperature. The sequence is that of Stabilizer of axonemal microtubules 1 (Saxo1) from Rattus norvegicus (Rat).